The sequence spans 239 residues: Small ribosomal subunit protein uS5 (239 aa).

The segment at Met1–Gly62 is disordered. Residues Ala9–Ala19 show a composition bias toward low complexity. Over residues Gly34–Gly62 the composition is skewed to basic and acidic residues. Positions Leu65–Val128 constitute an S5 DRBM domain.

The protein belongs to the universal ribosomal protein uS5 family. In terms of assembly, part of the 30S ribosomal subunit. Contacts proteins S4 and S8.

With S4 and S12 plays an important role in translational accuracy. Its function is as follows. Located at the back of the 30S subunit body where it stabilizes the conformation of the head with respect to the body. In Rhizorhabdus wittichii (strain DSM 6014 / CCUG 31198 / JCM 15750 / NBRC 105917 / EY 4224 / RW1) (Sphingomonas wittichii), this protein is Small ribosomal subunit protein uS5.